The following is a 249-amino-acid chain: Probable endopeptidase YafL (249 aa).

The N-terminal stretch at 1-17 (MSLPSIPSFVLSGLLLI) is a signal peptide. C18 carries the N-palmitoyl cysteine lipid modification. C18 is lipidated: S-diacylglycerol cysteine. The region spanning 116 to 243 (HNITEVAIHR…DHFLGARRIL (128 aa)) is the NlpC/P60 domain. Catalysis depends on C147, which acts as the Nucleophile. Residue H202 is the Proton acceptor of the active site. Residue E214 is part of the active site.

This sequence belongs to the peptidase C40 family.

It localises to the cell membrane. This Escherichia coli (strain K12) protein is Probable endopeptidase YafL (yafL).